A 301-amino-acid chain; its full sequence is Transcription factor bHLH103 (301 aa).

Positions 29-106 (PRSAEIVVDF…LEGLFDSSEQ (78 aa)) constitute a KRAB domain. 2 disordered regions span residues 161–184 (EKSG…ETPS) and 239–272 (TSPH…PRQD). The region spanning 180 to 229 (LETPSHFPSFKVRKEKLGDRITALQQLVSPFGKTDTASVLHDAIDYIKFL) is the bHLH domain. A compositionally biased stretch (polar residues) spans 239 to 269 (TSPHLNSIGSGEQKQWSDKSSNNTHNQNCSP).

As to quaternary structure, homodimer. In terms of tissue distribution, mature root endodermis.

The protein localises to the nucleus. The sequence is that of Transcription factor bHLH103 (BHLH103) from Arabidopsis thaliana (Mouse-ear cress).